Reading from the N-terminus, the 554-residue chain is Chaperonin GroEL (554 aa).

ATP is bound by residues 30–33, Lys51, 87–91, Gly416, and Asp503; these read TLGP and DGTTT.

This sequence belongs to the chaperonin (HSP60) family. In terms of assembly, forms a cylinder of 14 subunits composed of two heptameric rings stacked back-to-back. Interacts with the co-chaperonin GroES.

Its subcellular location is the cytoplasm. It carries out the reaction ATP + H2O + a folded polypeptide = ADP + phosphate + an unfolded polypeptide.. Together with its co-chaperonin GroES, plays an essential role in assisting protein folding. The GroEL-GroES system forms a nano-cage that allows encapsulation of the non-native substrate proteins and provides a physical environment optimized to promote and accelerate protein folding. This is Chaperonin GroEL from Holospora obtusa.